The following is a 126-amino-acid chain: Anti-adapter protein IraD (126 aa).

This sequence belongs to the GpW/Gp25 family. IraD subfamily. Interacts with RssB.

The protein localises to the cytoplasm. Inhibits RpoS proteolysis by regulating RssB activity, thereby increasing the stability of the sigma stress factor RpoS during oxidative stress. Its effect on RpoS stability is due to its interaction with RssB, which probably blocks the interaction of RssB with RpoS, and the consequent delivery of the RssB-RpoS complex to the ClpXP protein degradation pathway. This is Anti-adapter protein IraD from Salmonella choleraesuis (strain SC-B67).